Consider the following 594-residue polypeptide: Nucleolar protein 56 (594 aa).

Residues Lys-87, Lys-230, and Lys-240 each participate in a glycyl lysine isopeptide (Lys-Gly) (interchain with G-Cter in SUMO2) cross-link. The 119-residue stretch at 292 to 410 (VAPSLSALIG…VEERLSFYET (119 aa)) folds into the Nop domain. Residue Ser-314 is modified to Phosphoserine. Residue Arg-359 is modified to Omega-N-methylarginine. Low complexity-rich tracts occupy residues 458-469 (ALASSENSSSTP) and 488-504 (QEVPQENGMEDPSISFS). The segment at 458–594 (ALASSENSSS…KKFHKASQED (137 aa)) is disordered. 2 positions are modified to phosphoserine: Ser-466 and Ser-467. Position 468 is a phosphothreonine (Thr-468). 4 positions are modified to phosphoserine: Ser-511, Ser-519, Ser-520, and Ser-537. Lys-540 participates in a covalent cross-link: Glycyl lysine isopeptide (Lys-Gly) (interchain with G-Cter in SUMO2). Position 561 is an N6-acetyllysine (Lys-561). Ser-563 is modified (phosphoserine). Lys-564 participates in a covalent cross-link: Glycyl lysine isopeptide (Lys-Gly) (interchain with G-Cter in SUMO2). Phosphoserine occurs at positions 569, 570, 579, and 581. Basic residues predominate over residues 580 to 594 (SSKKKKKFHKASQED).

This sequence belongs to the NOP5/NOP56 family. As to quaternary structure, part of a large pre-ribosomal ribonucleoprotein (RNP) complex, that consists of at least 62 ribosomal proteins, 45 nonribosomal proteins and both pre-rRNA and mature rRNA species. Within this complex directly interacts with TCOF1 in an RNA-independent manner. Core component of box C/D small nucleolar ribonucleoprotein (snoRNP) particles; the core proteins SNU13, NOP56, NOP58 and FBL or FBLL1 assemble stepwise onto the snoRNA. Interacts with NOP1 and NOP58. Interacts with NUFIP1, RUVBL1 and RUVBL2; RUVBL1:RUVBL2 seem to bridge the association of NOP56 with NUFIP1. Part of the small subunit (SSU) processome, composed of more than 70 proteins and the RNA chaperone small nucleolar RNA (snoRNA) U3. Interacts with NOP2 and FBL.

It localises to the nucleus. The protein resides in the nucleolus. Its subcellular location is the cytoplasm. It is found in the nucleoplasm. In terms of biological role, involved in the early to middle stages of 60S ribosomal subunit biogenesis. Required for the biogenesis of box C/D snoRNAs such U3, U8 and U14 snoRNAs. Part of the small subunit (SSU) processome, first precursor of the small eukaryotic ribosomal subunit. During the assembly of the SSU processome in the nucleolus, many ribosome biogenesis factors, an RNA chaperone and ribosomal proteins associate with the nascent pre-rRNA and work in concert to generate RNA folding, modifications, rearrangements and cleavage as well as targeted degradation of pre-ribosomal RNA by the RNA exosome. Core component of box C/D small nucleolar ribonucleoprotein (snoRNP) complexes that function in methylation of multiple sites on ribosomal RNAs (rRNAs) and messenger RNAs (mRNAs). This is Nucleolar protein 56 from Homo sapiens (Human).